Here is a 479-residue protein sequence, read N- to C-terminus: Signal recognition particle subunit SRP54 1 (479 aa).

The interval 1–295 (MVLAELGGRI…DVKPFVSRLL (295 aa)) is G-domain. GTP contacts are provided by residues 108 to 115 (GLQGAGKT), 190 to 194 (DTSGR), and 248 to 251 (TKMD). An M-domain region spans residues 296-479 (GKGDWSGLVD…MMGMFGGGGK (184 aa)).

Belongs to the GTP-binding SRP family. SRP54 subfamily. As to quaternary structure, component of a signal recognition particle (SRP) complex that consists of a 7SL RNA molecule of 300 nucleotides and six protein subunits: SRP72, SRP68, SRP54, SRP19, SRP14 and SRP9.

The protein localises to the cytoplasm. It localises to the endoplasmic reticulum. It catalyses the reaction GTP + H2O = GDP + phosphate + H(+). Its function is as follows. Component of the signal recognition particle (SRP) complex, a ribonucleoprotein complex that mediates the cotranslational targeting of secretory and membrane proteins to the endoplasmic reticulum (ER). As part of the SRP complex, associates with the SRP receptor (SR) component SRPRA to target secretory proteins to the endoplasmic reticulum membrane. Binds to the signal sequence of presecretory proteins when they emerge from the ribosomes. Displays basal GTPase activity, and stimulates reciprocal GTPase activation of the SR subunit SRPRA. Forms a guanosine 5'-triphosphate (GTP)-dependent complex with the SR subunit SRPRA. SR compaction and GTPase mediated rearrangement of SR drive SRP-mediated cotranslational protein translocation into the ER. Requires the presence of SRP9/SRP14 and/or SRP19 to stably interact with RNA. This Arabidopsis thaliana (Mouse-ear cress) protein is Signal recognition particle subunit SRP54 1 (SRP-54A).